A 182-amino-acid chain; its full sequence is MGTLTVITGPSGVGKGTLVQRLLARNPSIWVSVSATTRAPREGEREGESYFFHSRERFDALVQEGGLLEWAEFAGNCYGTPRAPVEQQLQAGRPVLLEIELEGARQVRRSFSKARQIFLAPPSFEELERRIRGRGTDSEDAIQQRLLRAREELSAQGEFDAVVVNDDLDQALLKLEGLMGLG.

Residues 2 to 180 (GTLTVITGPS…ALLKLEGLMG (179 aa)) enclose the Guanylate kinase-like domain. 9-16 (GPSGVGKG) contacts ATP.

This sequence belongs to the guanylate kinase family.

It is found in the cytoplasm. It carries out the reaction GMP + ATP = GDP + ADP. The enzyme catalyses dZMP + ATP = dZDP + ADP. The protein operates within purine metabolism. In terms of biological role, essential for recycling GMP and indirectly, cGMP. (Microbial infection) Catalyzes the phosphorylation of dZMP to dZDP, when the bacterium is infected by a phage that produces the substrate for the synthesis of dZTP (2- amino-2'-deoxyadenosine 5'-triphosphate), which is then used by the phage as a DNA polymerase substrate. The chain is Guanylate kinase from Parasynechococcus marenigrum (strain WH8102).